A 247-amino-acid chain; its full sequence is Carboxy-S-adenosyl-L-methionine synthase (247 aa).

Residues Tyr39, Asp89–Asn90, Asp117–Ile118, Asn132, and Arg199 each bind S-adenosyl-L-methionine.

Belongs to the class I-like SAM-binding methyltransferase superfamily. Cx-SAM synthase family. In terms of assembly, homodimer.

The enzyme catalyses prephenate + S-adenosyl-L-methionine = carboxy-S-adenosyl-L-methionine + 3-phenylpyruvate + H2O. Catalyzes the conversion of S-adenosyl-L-methionine (SAM) to carboxy-S-adenosyl-L-methionine (Cx-SAM). The protein is Carboxy-S-adenosyl-L-methionine synthase of Sodalis glossinidius (strain morsitans).